Consider the following 475-residue polypeptide: 3-hydroxyacyl-CoA dehydrogenase-like protein LAM1 (475 aa).

99–104 (GTRPFA) lines the NAD(+) pocket. K149 is a CoA binding site. N245 contacts NAD(+).

This sequence belongs to the 3-hydroxyacyl-CoA dehydrogenase family.

The protein operates within mycotoxin biosynthesis. Functionally, 3-hydroxyacyl-CoA dehydrogenase-like protein; part of the Tox1A locus, one of the 2 loci that mediate the biosynthesis of T-toxin, a family of linear polyketides 37 to 45 carbons in length, of which the major component is 41 carbons, and which leads to high virulence to maize. One of the PKSs (PKS1 or PKS2) could synthesize a precursor, used subsequently by the other PKS as starter unit, to add additional carbons. Variability in the length of the final carbon backbone C35-47 could be achieved by varying the number of condensation cycles, or use of different starter or extender units or might be due to decarboxylation of the penultimate product, catalyzed by DEC1. Additional proteins are required for the biosynthesis of T-toxin, including oxidoreductases RED1, RED2, RED3, LAM1 and OXI1, as well as esterase TOX9. This is 3-hydroxyacyl-CoA dehydrogenase-like protein LAM1 from Cochliobolus heterostrophus (strain C4 / ATCC 48331 / race T) (Southern corn leaf blight fungus).